A 465-amino-acid polypeptide reads, in one-letter code: UPF0324 membrane protein CC_0425 (465 aa).

The disordered stretch occupies residues 97–132 (HRQPDRAPPARASEQPLRQGRRALRRRPDQRRHRPR). Positions 115-132 (QGRRALRRRPDQRRHRPR) are enriched in basic residues. 10 consecutive transmembrane segments (helical) span residues 135-157 (AAAL…LMAV), 172-194 (LLAV…GAGL), 219-241 (AALG…GIGA), 251-273 (LAEA…LAAS), 286-308 (TALV…PPIA), 318-340 (AGVF…ASVS), 352-374 (LSRI…RTAQ), 378-400 (ISGL…ARGL), 405-427 (PALV…GAIS), and 442-464 (LAIL…TRIF).

This sequence belongs to the UPF0324 family.

It is found in the cell membrane. This Caulobacter vibrioides (strain ATCC 19089 / CIP 103742 / CB 15) (Caulobacter crescentus) protein is UPF0324 membrane protein CC_0425.